Consider the following 90-residue polypeptide: 10.1 kDa protein (90 aa).

This chain is 10.1 kDa protein, found in Pseudomonas aeruginosa (Bacteriophage Pf1).